Reading from the N-terminus, the 237-residue chain is Peroxisomal membrane protein 11-1 (237 aa).

Residues 1–92 (MSTLDATRAE…TLVLLGKSKN (92 aa)) lie on the Cytoplasmic side of the membrane. Residues 93–113 (ALLSTFLFLDQFVWLGRTGIY) traverse the membrane as a helical segment. Topologically, residues 114-204 (KNKERTDRIV…VGLLQLSPKK (91 aa)) are lumenal. The helical transmembrane segment at 205 to 223 (ITPRVTGAFGFVTSLISCY) threads the bilayer. Topologically, residues 224–237 (QQLPSRAPAIKVKA) are cytoplasmic.

This sequence belongs to the peroxin-11 family. Expressed in seedlings, leaf sheaths, flag leaf, panicles and spikelets.

It is found in the peroxisome membrane. Involved in peroxisomal proliferation. In Oryza sativa subsp. japonica (Rice), this protein is Peroxisomal membrane protein 11-1 (PEX11-1).